A 378-amino-acid chain; its full sequence is S-adenosylmethionine:tRNA ribosyltransferase-isomerase (378 aa).

The protein belongs to the QueA family. Monomer.

The protein resides in the cytoplasm. The enzyme catalyses 7-aminomethyl-7-carbaguanosine(34) in tRNA + S-adenosyl-L-methionine = epoxyqueuosine(34) in tRNA + adenine + L-methionine + 2 H(+). Its pathway is tRNA modification; tRNA-queuosine biosynthesis. Transfers and isomerizes the ribose moiety from AdoMet to the 7-aminomethyl group of 7-deazaguanine (preQ1-tRNA) to give epoxyqueuosine (oQ-tRNA). The sequence is that of S-adenosylmethionine:tRNA ribosyltransferase-isomerase from Prochlorococcus marinus (strain MIT 9312).